A 207-amino-acid polypeptide reads, in one-letter code: Holliday junction branch migration complex subunit RuvA (207 aa).

Residues 1-63 form a domain I region; that stretch reads MIDSLHGEVL…DDGIDLYAFE (63 aa). The segment at 64 to 142 is domain II; the sequence is SDEARQMFAM…VFDSGDSASE (79 aa). Residues 143–154 are flexible linker; it reads PQSGVGGNSEAE. Residues 155-207 are domain III; that stretch reads VDSGVVGTVTQALVELGFPEKQAEKTATSAAAEGGSVSEILKRALRSMSSERN.

Belongs to the RuvA family. In terms of assembly, homotetramer. Forms an RuvA(8)-RuvB(12)-Holliday junction (HJ) complex. HJ DNA is sandwiched between 2 RuvA tetramers; dsDNA enters through RuvA and exits via RuvB. An RuvB hexamer assembles on each DNA strand where it exits the tetramer. Each RuvB hexamer is contacted by two RuvA subunits (via domain III) on 2 adjacent RuvB subunits; this complex drives branch migration. In the full resolvosome a probable DNA-RuvA(4)-RuvB(12)-RuvC(2) complex forms which resolves the HJ.

It is found in the cytoplasm. The RuvA-RuvB-RuvC complex processes Holliday junction (HJ) DNA during genetic recombination and DNA repair, while the RuvA-RuvB complex plays an important role in the rescue of blocked DNA replication forks via replication fork reversal (RFR). RuvA specifically binds to HJ cruciform DNA, conferring on it an open structure. The RuvB hexamer acts as an ATP-dependent pump, pulling dsDNA into and through the RuvAB complex. HJ branch migration allows RuvC to scan DNA until it finds its consensus sequence, where it cleaves and resolves the cruciform DNA. The chain is Holliday junction branch migration complex subunit RuvA from Corynebacterium kroppenstedtii (strain DSM 44385 / JCM 11950 / CIP 105744 / CCUG 35717).